The sequence spans 165 residues: MAHVLAVYPGTFDPITLGHEDLVRRAARLFDRVIVAVAIAHHKKTLFSLDERMEMARQALADCPQVQVESFEGLVTEFTAARGGTAMVRGLRSGTDFDYEFQLAGMNRALVPGVETVFLTPASQYQFISSTLVREIGTLGGDVAQFVSPGVHERLLHKLGRTAAA.

Substrate is bound at residue threonine 11. ATP contacts are provided by residues 11–12 (TF) and histidine 19. Substrate-binding residues include lysine 43, valine 75, and arginine 89. Residues 90–92 (GLR), glutamate 100, and 125–131 (YQFISST) contribute to the ATP site.

This sequence belongs to the bacterial CoaD family. Homohexamer. The cofactor is Mg(2+).

The protein localises to the cytoplasm. It carries out the reaction (R)-4'-phosphopantetheine + ATP + H(+) = 3'-dephospho-CoA + diphosphate. It functions in the pathway cofactor biosynthesis; coenzyme A biosynthesis; CoA from (R)-pantothenate: step 4/5. Its function is as follows. Reversibly transfers an adenylyl group from ATP to 4'-phosphopantetheine, yielding dephospho-CoA (dPCoA) and pyrophosphate. The sequence is that of Phosphopantetheine adenylyltransferase from Acidovorax ebreus (strain TPSY) (Diaphorobacter sp. (strain TPSY)).